The primary structure comprises 66 residues: Large ribosomal subunit protein bL33c (66 aa).

The protein belongs to the bacterial ribosomal protein bL33 family.

Its subcellular location is the plastid. It localises to the chloroplast. The polypeptide is Large ribosomal subunit protein bL33c (Solanum bulbocastanum (Wild potato)).